We begin with the raw amino-acid sequence, 273 residues long: 3-methyl-2-oxobutanoate hydroxymethyltransferase (273 aa).

D49 and D88 together coordinate Mg(2+). Residues 49–50 (DS), D88, and K118 each bind 3-methyl-2-oxobutanoate. Position 120 (E120) interacts with Mg(2+). E187 serves as the catalytic Proton acceptor.

This sequence belongs to the PanB family. As to quaternary structure, homodecamer; pentamer of dimers. Requires Mg(2+) as cofactor.

It is found in the cytoplasm. The enzyme catalyses 3-methyl-2-oxobutanoate + (6R)-5,10-methylene-5,6,7,8-tetrahydrofolate + H2O = 2-dehydropantoate + (6S)-5,6,7,8-tetrahydrofolate. The protein operates within cofactor biosynthesis; (R)-pantothenate biosynthesis; (R)-pantoate from 3-methyl-2-oxobutanoate: step 1/2. In terms of biological role, catalyzes the reversible reaction in which hydroxymethyl group from 5,10-methylenetetrahydrofolate is transferred onto alpha-ketoisovalerate to form ketopantoate. This chain is 3-methyl-2-oxobutanoate hydroxymethyltransferase, found in Sinorhizobium medicae (strain WSM419) (Ensifer medicae).